The primary structure comprises 223 residues: Cytidylate kinase (223 aa).

10–18 is a binding site for ATP; sequence GPAGSGKSS.

Belongs to the cytidylate kinase family. Type 1 subfamily.

Its subcellular location is the cytoplasm. It carries out the reaction CMP + ATP = CDP + ADP. It catalyses the reaction dCMP + ATP = dCDP + ADP. The chain is Cytidylate kinase from Pseudothermotoga lettingae (strain ATCC BAA-301 / DSM 14385 / NBRC 107922 / TMO) (Thermotoga lettingae).